The following is a 376-amino-acid chain: UDP-N-acetylglucosamine--N-acetylmuramyl-(pentapeptide) pyrophosphoryl-undecaprenol N-acetylglucosamine transferase (376 aa).

UDP-N-acetyl-alpha-D-glucosamine contacts are provided by residues 11–13 (TGG), N117, R160, S208, and Q310.

This sequence belongs to the glycosyltransferase 28 family. MurG subfamily.

It is found in the cell inner membrane. The enzyme catalyses di-trans,octa-cis-undecaprenyl diphospho-N-acetyl-alpha-D-muramoyl-L-alanyl-D-glutamyl-meso-2,6-diaminopimeloyl-D-alanyl-D-alanine + UDP-N-acetyl-alpha-D-glucosamine = di-trans,octa-cis-undecaprenyl diphospho-[N-acetyl-alpha-D-glucosaminyl-(1-&gt;4)]-N-acetyl-alpha-D-muramoyl-L-alanyl-D-glutamyl-meso-2,6-diaminopimeloyl-D-alanyl-D-alanine + UDP + H(+). The protein operates within cell wall biogenesis; peptidoglycan biosynthesis. In terms of biological role, cell wall formation. Catalyzes the transfer of a GlcNAc subunit on undecaprenyl-pyrophosphoryl-MurNAc-pentapeptide (lipid intermediate I) to form undecaprenyl-pyrophosphoryl-MurNAc-(pentapeptide)GlcNAc (lipid intermediate II). In Rickettsia conorii (strain ATCC VR-613 / Malish 7), this protein is UDP-N-acetylglucosamine--N-acetylmuramyl-(pentapeptide) pyrophosphoryl-undecaprenol N-acetylglucosamine transferase.